We begin with the raw amino-acid sequence, 1024 residues long: Protein translocase subunit SecA (1024 aa).

ATP contacts are provided by residues Gln143, 161-165 (GEGKT), and Asp661. Residues 970-1024 (HEEAGSVYNAQPDGEPESQASKQQPVVADHSKPGRNDLCPCGSGKKYKNCHGREA) form a disordered region. Zn(2+) is bound by residues Cys1008, Cys1010, Cys1019, and His1020. The span at 1014-1024 (KKYKNCHGREA) shows a compositional bias: basic residues.

The protein belongs to the SecA family. In terms of assembly, monomer and homodimer. Part of the essential Sec protein translocation apparatus which comprises SecA, SecYEG and auxiliary proteins SecDF. Other proteins may also be involved. Zn(2+) serves as cofactor.

The protein localises to the cell inner membrane. The protein resides in the cytoplasm. It carries out the reaction ATP + H2O + cellular proteinSide 1 = ADP + phosphate + cellular proteinSide 2.. In terms of biological role, part of the Sec protein translocase complex. Interacts with the SecYEG preprotein conducting channel. Has a central role in coupling the hydrolysis of ATP to the transfer of proteins into and across the cell membrane, serving as an ATP-driven molecular motor driving the stepwise translocation of polypeptide chains across the membrane. The sequence is that of Protein translocase subunit SecA from Chlorobium luteolum (strain DSM 273 / BCRC 81028 / 2530) (Pelodictyon luteolum).